Here is a 118-residue protein sequence, read N- to C-terminus: D-dopachrome decarboxylase (118 aa).

At proline 2 the chain carries N-acetylproline. An N6-acetyllysine modification is found at lysine 33.

It belongs to the MIF family. In terms of assembly, homotrimer.

It is found in the cytoplasm. The catalysed reaction is D-dopachrome + H(+) = 5,6-dihydroxyindole + CO2. Functionally, tautomerization of D-dopachrome with decarboxylation to give 5,6-dihydroxyindole (DHI). The protein is D-dopachrome decarboxylase (DDT) of Bos taurus (Bovine).